Here is a 140-residue protein sequence, read N- to C-terminus: NADPH-dependent 7-cyano-7-deazaguanine reductase (140 aa).

C49 serves as the catalytic Thioimide intermediate. D56 functions as the Proton donor in the catalytic mechanism. Residues I71–L73 and H90–E91 contribute to the substrate site.

It belongs to the GTP cyclohydrolase I family. QueF type 1 subfamily.

It localises to the cytoplasm. It catalyses the reaction 7-aminomethyl-7-carbaguanine + 2 NADP(+) = 7-cyano-7-deazaguanine + 2 NADPH + 3 H(+). It participates in tRNA modification; tRNA-queuosine biosynthesis. In terms of biological role, catalyzes the NADPH-dependent reduction of 7-cyano-7-deazaguanine (preQ0) to 7-aminomethyl-7-deazaguanine (preQ1). This is NADPH-dependent 7-cyano-7-deazaguanine reductase from Prochlorococcus marinus (strain NATL2A).